Here is a 424-residue protein sequence, read N- to C-terminus: Zinc finger and BTB domain-containing protein 6 (424 aa).

Positions 33-97 (CDVSIYINDT…CYTGALEVKR (65 aa)) constitute a BTB domain. At Ser202 the chain carries Phosphoserine. 4 C2H2-type zinc fingers span residues 301–323 (HQCP…LKMH), 326–348 (FLCL…IRGH), 354–376 (FQCT…LNIH), and 382–405 (YKCH…TSVH). The segment at 402–424 (TSVHGRSSGEKLSRPDLKRQSLL) is disordered. Residues 408–424 (SSGEKLSRPDLKRQSLL) show a composition bias toward basic and acidic residues.

As to expression, widely expressed with highest levels in brain.

The protein resides in the nucleus. Its function is as follows. May be involved in transcriptional regulation. The polypeptide is Zinc finger and BTB domain-containing protein 6 (ZBTB6) (Homo sapiens (Human)).